Here is an 85-residue protein sequence, read N- to C-terminus: RNA-binding protein Hfq (85 aa).

Positions 11–71 (DTFLNHVRKS…ISTIMPGHPV (61 aa)) constitute a Sm domain.

The protein belongs to the Hfq family. Homohexamer.

RNA chaperone that binds small regulatory RNA (sRNAs) and mRNAs to facilitate mRNA translational regulation in response to envelope stress, environmental stress and changes in metabolite concentrations. Also binds with high specificity to tRNAs. Seems to be involved in the regulation of NifA. In Azorhizobium caulinodans (strain ATCC 43989 / DSM 5975 / JCM 20966 / LMG 6465 / NBRC 14845 / NCIMB 13405 / ORS 571), this protein is RNA-binding protein Hfq.